The primary structure comprises 114 residues: Beta-microseminoprotein E1 (114 aa).

A signal peptide spans 1–20 (MNVLLGGLVIFATFVTLCNG). Disulfide bonds link C22-C70, C38-C62, C57-C93, C60-C69, and C84-C107.

Belongs to the beta-microseminoprotein family.

It is found in the secreted. This Saguinus oedipus (Cotton-top tamarin) protein is Beta-microseminoprotein E1 (MSPE).